Consider the following 597-residue polypeptide: Aspartate--tRNA(Asp/Asn) ligase (597 aa).

Glu-176 is an L-aspartate binding site. The segment at 200–203 is aspartate; sequence QQFK. L-aspartate-binding residues include Arg-222 and His-451. Residue 222-224 participates in ATP binding; it reads RDE. Glu-489 serves as a coordination point for ATP. Arg-496 contributes to the L-aspartate binding site. Residue 541 to 544 participates in ATP binding; it reads GIDR.

Belongs to the class-II aminoacyl-tRNA synthetase family. Type 1 subfamily. As to quaternary structure, homodimer.

The protein resides in the cytoplasm. It carries out the reaction tRNA(Asx) + L-aspartate + ATP = L-aspartyl-tRNA(Asx) + AMP + diphosphate. Functionally, aspartyl-tRNA synthetase with relaxed tRNA specificity since it is able to aspartylate not only its cognate tRNA(Asp) but also tRNA(Asn). Reaction proceeds in two steps: L-aspartate is first activated by ATP to form Asp-AMP and then transferred to the acceptor end of tRNA(Asp/Asn). The polypeptide is Aspartate--tRNA(Asp/Asn) ligase (Orientia tsutsugamushi (strain Boryong) (Rickettsia tsutsugamushi)).